A 95-amino-acid polypeptide reads, in one-letter code: Hiracin-JM79 immunity factor (95 aa).

Imparts immunity to bacteriocin hiracin-JM79 to naturally sensitive host strains. This chain is Hiracin-JM79 immunity factor, found in Enterococcus hirae.